The following is a 323-amino-acid chain: MSFASETKKELTHMDVSDSDAKVELAAFIRMNGAISFSNQLVIMDVQTENAAIARRMYQLLKDLYEVPIELLVRRKMKLKKNNVYIVRLKSGTRGILEDLRILEPPMTFTKSIDRGFVKKRSAKRAYLRGAFLASGSVNNPETSSYHLEIFSVYEEHNEAICALMNQFDLNARTLERKNGFITYLKEAEKITEFLSIIGATSALLHFEDVRIMRDMRNSVNRLVNCETANLNKTINAAVRQIDNIKYIQSTVGLEALPERLREIAALRIANEDVTLKELGEMLTTGQVSKSGINHRLRKLDQIAERLRSGETPAQVGLKVSNS.

The segment at residues 275–309 is a DNA-binding region (H-T-H motif); it reads TLKELGEMLTTGQVSKSGINHRLRKLDQIAERLRS.

It belongs to the WhiA family.

Functionally, involved in cell division and chromosome segregation. This is Probable cell division protein WhiA from Listeria innocua serovar 6a (strain ATCC BAA-680 / CLIP 11262).